A 578-amino-acid polypeptide reads, in one-letter code: Putative diflavin flavoprotein A 2 (578 aa).

The interval 39–233 (QQGTTSNSYL…PPPRLYAPAH (195 aa)) is zinc metallo-hydrolase. The Flavodoxin-like domain maps to 262 to 404 (VALFYASAYG…AANEFAQALK (143 aa)). A flavodoxin-reductase-like region spans residues 429-578 (VNRVVGSLCV…TAIQHRKTSS (150 aa)).

In the N-terminal section; belongs to the zinc metallo-hydrolase group 3 family. The protein in the C-terminal section; belongs to the flavodoxin reductase family. Requires Fe cation as cofactor.

Its function is as follows. Mediates electron transfer from NADH to oxygen, reducing it to water. This modular protein has 3 redox cofactors, in other organisms the same activity requires 2 or 3 proteins. The sequence is that of Putative diflavin flavoprotein A 2 (dfa2) from Thermosynechococcus vestitus (strain NIES-2133 / IAM M-273 / BP-1).